The following is a 1221-amino-acid chain: Fibulin-2 (1221 aa).

A signal peptide spans 1 to 26; the sequence is MLLQESAGVWLALALVTALTPSPSMA. The subdomain NA (Cys-rich) stretch occupies residues 27 to 176; it reads VPWQDCTGAE…ELICYQLPGC (150 aa). The interval 27-434 is n; it reads VPWQDCTGAE…DGSTKDLIET (408 aa). Residues 177-434 are subdomain NB (Cys-free); sequence HGNFSDAEEG…DGSTKDLIET (258 aa). An N-linked (GlcNAc...) asparagine glycan is attached at Asn-179. Disordered regions lie at residues 248–329 and 341–399; these read PTAA…LIPD and GAAP…PQHP. Residues 270-283 show a composition bias toward acidic residues; it reads DTEEDEEEEEEETL. Positions 312 to 322 are enriched in basic and acidic residues; sequence QEKEAEAKAGP. The Cell attachment site signature appears at 421-423; sequence RGD. 11 cysteine pairs are disulfide-bonded: Cys-435–Cys-462, Cys-436–Cys-469, Cys-449–Cys-470, Cys-479–Cys-508, Cys-492–Cys-509, Cys-511–Cys-535, Cys-512–Cys-542, Cys-525–Cys-543, Cys-598–Cys-610, Cys-606–Cys-619, and Cys-621–Cys-634. 3 consecutive Anaphylatoxin-like domains span residues 435–477, 478–510, and 511–543; these read CCAA…LKEK, SCVA…QCCD, and CCGL…LSCC. Asn-497 carries an N-linked (GlcNAc...) asparagine glycan. An EGF-like 1; calcium-binding domain is found at 594-635; it reads DQDECLMLPGELCQHLCINTVGSYRCACFPGFELQGDGRTCR. The interval 633-661 is disordered; it reads TCRPDRGAPQLDTARESAPRSESAQVSPN. Residues 652–661 show a composition bias toward polar residues; it reads RSESAQVSPN. An EGF-like 2 domain is found at 669–708; sequence QPNTCKDNGPCRQVCRVVGDTAMCSCFPGYAIMADGVSCE. 5 disulfide bridges follow: Cys-673-Cys-683, Cys-679-Cys-692, Cys-694-Cys-707, Cys-713-Cys-726, and Cys-720-Cys-735. One can recognise an EGF-like 3; calcium-binding domain in the interval 709–755; that stretch reads DQDECLMGTHDCSWKQFCVNTLGSFYCVNHTVLCAEGYILNAHRKCV. Asn-737 carries an N-linked (GlcNAc...) asparagine glycan. A disulfide bridge connects residues Cys-742 and Cys-754. An EGF-like 4; calcium-binding domain is found at 756–800; it reads DINECVTDLHTCTRAEHCVNTPGSFQCYKALTCEPGYVLTDGECT. The region spanning 801-846 is the EGF-like 5; calcium-binding domain; it reads DVDECVTGTHNCQAGFSCQNTKGSFYCQARQRCMDGFLQDPEGNCV. Cystine bridges form between Cys-805–Cys-818, Cys-812–Cys-827, and Cys-833–Cys-845. In terms of domain architecture, EGF-like 6; calcium-binding spans 847 to 894; it reads DINECTSLLEPCRSGFSCINTVGSYTCQRNPLVCGRGYHANEEGSECV. An EGF-like 7; calcium-binding domain is found at 895–937; it reads DVNECETGVHRCGEGQLCYNLPGSYRCDCKPGFQRDAFGRTCI. Cystine bridges form between Cys-899–Cys-912, Cys-906–Cys-921, Cys-923–Cys-936, Cys-942–Cys-954, Cys-950–Cys-963, Cys-965–Cys-978, Cys-984–Cys-993, Cys-989–Cys-1002, Cys-1004–Cys-1017, Cys-1023–Cys-1035, Cys-1031–Cys-1044, Cys-1046–Cys-1060, Cys-1066–Cys-1079, Cys-1073–Cys-1088, and Cys-1093–Cys-1105. Residues 938 to 979 enclose the EGF-like 8; calcium-binding domain; sequence DVNECWVSPGRLCQHTCENTPGSYRCSCAAGFLLAADGKHCE. The region spanning 980-1018 is the EGF-like 9; calcium-binding domain; that stretch reads DVNECETRRCSQECANIYGSYQCYCRQGYQLAEDGHTCT. One can recognise an EGF-like 10; calcium-binding domain in the interval 1019-1061; sequence DIDECAQGAGILCTFRCVNVPGSYQCACPEQGYTMMANGRSCK. One can recognise an EGF-like 11; calcium-binding domain in the interval 1062–1106; sequence DLDECALGTHNCSEAETCHNIQGSFRCLRFDCPPNYVRVSETKCE. N-linked (GlcNAc...) asparagine glycosylation is present at Asn-1072. Positions 1111 to 1221 are domain III; sequence QDITECQTSP…MYIFFTTFAP (111 aa).

The protein belongs to the fibulin family. Homotrimer; disulfide-linked. Interacts with LAMA2. Interacts with FBN1 (via N-terminal domain). Forms a ternary complex with ELN and FBN1. As to expression, component of both basement membranes and other connective tissues.

The protein resides in the secreted. Its subcellular location is the extracellular space. It localises to the extracellular matrix. Functionally, its binding to fibronectin and some other ligands is calcium dependent. May act as an adapter that mediates the interaction between FBN1 and ELN. The protein is Fibulin-2 (Fbln2) of Mus musculus (Mouse).